A 37-amino-acid chain; its full sequence is Large ribosomal subunit protein bL36c (37 aa).

It belongs to the bacterial ribosomal protein bL36 family.

Its subcellular location is the plastid. The protein localises to the chloroplast. The polypeptide is Large ribosomal subunit protein bL36c (Lactuca sativa (Garden lettuce)).